Here is a 321-residue protein sequence, read N- to C-terminus: Peptidase 1 (321 aa).

The first 18 residues, 1-18, serve as a signal peptide directing secretion; it reads MKIILAIASLLVLSAVYA. Positions 19–98 are excised as a propeptide; sequence RPASIKTFEE…LKTQFDLNAE (80 aa). Residue asparagine 34 is glycosylated (N-linked (GlcNAc...) asparagine). A disulfide bond links cysteine 130 and cysteine 170. Residue cysteine 133 is part of the active site. N-linked (GlcNAc...) asparagine glycosylation occurs at asparagine 151. Active-site residues include histidine 269 and asparagine 289.

It belongs to the peptidase C1 family.

It is found in the secreted. The enzyme catalyses Broad endopeptidase specificity.. In terms of biological role, probable thiol protease. This chain is Peptidase 1 (EURM1), found in Euroglyphus maynei (Mayne's house dust mite).